We begin with the raw amino-acid sequence, 269 residues long: MVKLLSIGGSDASGGAGIEADLKTFQEYGAFGVATLTAIVTMDPSRNWSHRVHSLEEDCVRDQLETAFAGVGVSAVKSGMLASVHAIECVAEYLERFAVAAYVFDPVMVCKGSGDALHRELNELMIQKLLPRATVVTPNLFETAQIAGISVPRTVDEMKEGARLIHERGASHVFVKGGGRLPGCKHALDVFYDGKTFHLVEDELVQSGWNHGAGCTVSAAITAGLGRGLTAYDAILSAKRFVTTGLRHGFQVNQWVGTGNLSKWRDRFH.

An ATP-binding site is contributed by Asn-139. Glu-142 contributes to the Mg(2+) binding site. Residues 176–180 (KGGGR), Asp-189, Val-205, Gly-214, and Lys-239 each bind ATP.

It belongs to the ThiD family.

It carries out the reaction pyridoxal + ATP = pyridoxal 5'-phosphate + ADP + H(+). Phosphorylates B6 vitamers; functions in a salvage pathway. Uses pyridoxal, pyridoxine, and pyridoxamine as substrates. This Treponema pallidum (strain Nichols) protein is Putative pyridoxine kinase (pdxK).